The sequence spans 318 residues: MFMINILTLILPILLAVAFLTLVERKILGYMQFRKGPNIVGPHGLLQPFADAIKLFTKEPLRPATSSTTMFIIAPVLALTLALTMWSPLPMPYPLINMNLGVLFMLAMSSLAVYSILWSGWASNSKYALIGALRAVAQTISYEVTLAIILLSVLLMNGSYTLSTLATTQEQLWLLFPSWPLAMMWFISTLAETNRAPFDLTEGESELVSGFNVEYAAGPFALFFLAEYANIIMMNMLTAILFLGTFHNPHNPELYTANLIIKTLLLTMSFLWIRASYPRFRYDQLMHLLWKNFLPLTLALCMWHISLPIMTASIPPQT.

8 consecutive transmembrane segments (helical) span residues 2–22, 70–90, 100–120, 136–156, 172–192, 222–242, 253–273, and 294–314; these read FMINILTLILPILLAVAFLTL, MFIIAPVLALTLALTMWSPLP, LGVLFMLAMSSLAVYSILWSG, VAQTISYEVTLAIILLSVLLM, LWLLFPSWPLAMMWFISTLAE, LFFLAEYANIIMMNMLTAILF, ELYTANLIIKTLLLTMSFLWI, and LPLTLALCMWHISLPIMTASI.

It belongs to the complex I subunit 1 family. Core subunit of respiratory chain NADH dehydrogenase (Complex I) which is composed of 45 different subunits.

It is found in the mitochondrion inner membrane. It carries out the reaction a ubiquinone + NADH + 5 H(+)(in) = a ubiquinol + NAD(+) + 4 H(+)(out). Core subunit of the mitochondrial membrane respiratory chain NADH dehydrogenase (Complex I) which catalyzes electron transfer from NADH through the respiratory chain, using ubiquinone as an electron acceptor. Essential for the catalytic activity and assembly of complex I. The chain is NADH-ubiquinone oxidoreductase chain 1 (MT-ND1) from Balaenoptera physalus (Fin whale).